Here is a 290-residue protein sequence, read N- to C-terminus: N-acetylmannosamine kinase (290 aa).

Residues 5-12 (AIDIGGTK) and 132-139 (GVGGGVVS) each bind ATP. Zn(2+)-binding residues include histidine 156, cysteine 166, cysteine 168, and cysteine 173.

The protein belongs to the ROK (NagC/XylR) family. NanK subfamily. Homodimer.

It carries out the reaction an N-acyl-D-mannosamine + ATP = an N-acyl-D-mannosamine 6-phosphate + ADP + H(+). The protein operates within amino-sugar metabolism; N-acetylneuraminate degradation; D-fructose 6-phosphate from N-acetylneuraminate: step 2/5. In terms of biological role, catalyzes the phosphorylation of N-acetylmannosamine (ManNAc) to ManNAc-6-P. In Citrobacter koseri (strain ATCC BAA-895 / CDC 4225-83 / SGSC4696), this protein is N-acetylmannosamine kinase.